A 258-amino-acid polypeptide reads, in one-letter code: Indole-3-glycerol phosphate synthase (258 aa).

The protein belongs to the TrpC family.

It catalyses the reaction 1-(2-carboxyphenylamino)-1-deoxy-D-ribulose 5-phosphate + H(+) = (1S,2R)-1-C-(indol-3-yl)glycerol 3-phosphate + CO2 + H2O. The protein operates within amino-acid biosynthesis; L-tryptophan biosynthesis; L-tryptophan from chorismate: step 4/5. The protein is Indole-3-glycerol phosphate synthase of Nautilia profundicola (strain ATCC BAA-1463 / DSM 18972 / AmH).